The following is a 201-amino-acid chain: Recombination protein RecR (201 aa).

The segment at 57–72 adopts a C4-type zinc-finger fold; sequence CSDCRTFTEQDVCAIC. One can recognise a Toprim domain in the interval 81–176; it reads GQICVVESPA…MASRIAHGVP (96 aa).

This sequence belongs to the RecR family.

May play a role in DNA repair. It seems to be involved in an RecBC-independent recombinational process of DNA repair. It may act with RecF and RecO. This is Recombination protein RecR from Pectobacterium carotovorum subsp. carotovorum (strain PC1).